A 288-amino-acid chain; its full sequence is Nucleotide-binding protein ASA_0318 (288 aa).

Residue 8 to 15 (GRSGSGKT) participates in ATP binding. 56 to 59 (DVRN) lines the GTP pocket.

The protein belongs to the RapZ-like family.

Displays ATPase and GTPase activities. This chain is Nucleotide-binding protein ASA_0318, found in Aeromonas salmonicida (strain A449).